The chain runs to 237 residues: uncharacterized protein (237 aa).

The segment at residues 1–25 (MRHIFQRLLPRRLWLAGLPCLALLG) is a signal peptide (tat-type signal). The interval 201–237 (IERQLSTRKPAGNFSPDTPHESEKPAPSTHEVTPDEP) is disordered.

Post-translationally, exported by the Tat system. The position of the signal peptide cleavage has not been experimentally proven. Can also be exported by the Sec system.

This is an uncharacterized protein from Escherichia coli (strain K12).